The primary structure comprises 405 residues: Mevalonate 3,5-bisphosphate decarboxylase (405 aa).

It belongs to the mevalonate 3,5-bisphosphate decarboxylase family. As to quaternary structure, homodimer.

The enzyme catalyses (R)-3,5-bisphosphomevalonate + H(+) = isopentenyl phosphate + phosphate + CO2. Its pathway is isoprenoid biosynthesis; isopentenyl diphosphate biosynthesis via mevalonate pathway. In terms of biological role, catalyzes the ATP-independent decarboxylation of (R)-mevalonate 3,5-bisphosphate to isopentenyl phosphate. Functions in an alternative mevalonate pathway, only present in extreme acidophiles of the Thermoplasmatales order, which passes through mevalonate 3-phosphate rather than mevalonate 5-phosphate. In Thermoplasma acidophilum (strain ATCC 25905 / DSM 1728 / JCM 9062 / NBRC 15155 / AMRC-C165), this protein is Mevalonate 3,5-bisphosphate decarboxylase.